A 425-amino-acid polypeptide reads, in one-letter code: Serine hydroxymethyltransferase (425 aa).

Residues leucine 124 and 128 to 130 (GHL) each bind (6S)-5,6,7,8-tetrahydrofolate. At lysine 233 the chain carries N6-(pyridoxal phosphate)lysine.

This sequence belongs to the SHMT family. Homodimer. The cofactor is pyridoxal 5'-phosphate.

The protein resides in the cytoplasm. It carries out the reaction (6R)-5,10-methylene-5,6,7,8-tetrahydrofolate + glycine + H2O = (6S)-5,6,7,8-tetrahydrofolate + L-serine. It participates in one-carbon metabolism; tetrahydrofolate interconversion. Its pathway is amino-acid biosynthesis; glycine biosynthesis; glycine from L-serine: step 1/1. Catalyzes the reversible interconversion of serine and glycine with tetrahydrofolate (THF) serving as the one-carbon carrier. This reaction serves as the major source of one-carbon groups required for the biosynthesis of purines, thymidylate, methionine, and other important biomolecules. Also exhibits THF-independent aldolase activity toward beta-hydroxyamino acids, producing glycine and aldehydes, via a retro-aldol mechanism. The chain is Serine hydroxymethyltransferase from Clavibacter michiganensis subsp. michiganensis (strain NCPPB 382).